A 473-amino-acid polypeptide reads, in one-letter code: Photosystem II CP43 reaction center protein (473 aa).

A propeptide spanning residues 1-14 is cleaved from the precursor; that stretch reads MKNLYSLRRFYHVE. At T15 the chain carries N-acetylthreonine. T15 is subject to Phosphothreonine. 5 helical membrane-spanning segments follow: residues 69–93, 134–155, 178–200, 255–275, and 291–312; these read LFEVAHFVPEKPMYEQGLILLPHLA, LVGPETLEESFPFFGYVWKDKN, KAMYFGGIYDTWAPGGGDVRIIS, KPWAWARRAFVWSGEAYLSYS, and WFNTTAYPSEFYGPTGPEASQS. A [CaMn4O5] cluster-binding site is contributed by E367. The helical transmembrane segment at 447-471 threads the bilayer; the sequence is RARAAAAGFEKGIDRDNEPVLSMRP.

The protein belongs to the PsbB/PsbC family. PsbC subfamily. As to quaternary structure, PSII is composed of 1 copy each of membrane proteins PsbA, PsbB, PsbC, PsbD, PsbE, PsbF, PsbH, PsbI, PsbJ, PsbK, PsbL, PsbM, PsbT, PsbX, PsbY, PsbZ, Psb30/Ycf12, at least 3 peripheral proteins of the oxygen-evolving complex and a large number of cofactors. It forms dimeric complexes. Requires Binds multiple chlorophylls and provides some of the ligands for the Ca-4Mn-5O cluster of the oxygen-evolving complex. It may also provide a ligand for a Cl- that is required for oxygen evolution. PSII binds additional chlorophylls, carotenoids and specific lipids. as cofactor.

The protein localises to the plastid. It is found in the chloroplast thylakoid membrane. Functionally, one of the components of the core complex of photosystem II (PSII). It binds chlorophyll and helps catalyze the primary light-induced photochemical processes of PSII. PSII is a light-driven water:plastoquinone oxidoreductase, using light energy to abstract electrons from H(2)O, generating O(2) and a proton gradient subsequently used for ATP formation. This chain is Photosystem II CP43 reaction center protein, found in Chlorella vulgaris (Green alga).